The following is a 591-amino-acid chain: Peroxisome assembly protein 2 (591 aa).

The interval 1-78 is disordered; the sequence is MSDSDPKPTA…TNIDTNNNTN (78 aa). At 1–148 the chain is on the peroxisomal matrix side; sequence MSDSDPKPTA…TSREGTRPAF (148 aa). The span at 7-26 shows a compositional bias: low complexity; it reads KPTAAKGAAPTSIPNSTRNP. The segment covering 27–54 has biased composition (pro residues); the sequence is NPTPPNPNPNPNPISTPAPTPTATPSPP. Positions 55–78 are enriched in low complexity; that stretch reads IASSSNNGNNSTRSTNIDTNNNTN. The chain crosses the membrane as a helical span at residues 149–175; the sequence is RVGQVDAELLDEELVELLRGQVREALR. Over 176–196 the chain is Cytoplasmic; the sequence is YVGGGGGGGGGGGGGGVGSGV. A helical transmembrane segment spans residues 197–222; sequence AQDWEAEISLALRAVLFKLTVWDHDA. Residues 223 to 246 lie on the Peroxisomal matrix side of the membrane; the sequence is TYGAALQNLKYTDARRDGPALAPP. A helical membrane pass occupies residues 247-273; it reads SRWQKALYGLVTVGGRYLWAKWEDWLL. The Cytoplasmic portion of the chain corresponds to 274-283; sequence EQDDGFEGPS. The helical transmembrane segment at 284–314 threads the bilayer; that stretch reads PRVKRLARWTSALSTLHASAALVSFLVFLLH. Residues 315–341 lie on the Peroxisomal matrix side of the membrane; sequence GRYRTLLDRLLRMRLAPPTSQVSREVS. Residues 342–365 form a helical membrane-spanning segment; sequence FEYLNRQLVWHAFTEFLLFVLPLV. Residues 366-591 lie on the Cytoplasmic side of the membrane; sequence GINRWRRWLA…EDGLDEDPES (226 aa). Zn(2+) is bound by residues Cys-408, Cys-411, Cys-449, Cys-451, Cys-454, Cys-457, Cys-472, and Cys-475. An RING-type; atypical zinc finger spans residues 408–475; sequence CAICYRDQNS…EGEGWPCLRC (68 aa). The disordered stretch occupies residues 512–591; it reads KAPSDHEEEE…EDGLDEDPES (80 aa). 2 stretches are compositionally biased toward acidic residues: residues 517 to 537 and 575 to 591; these read HEEE…ENEG and SEDY…DPES.

It belongs to the pex2/pex10/pex12 family. In terms of assembly, component of the PEX2-PEX10-PEX12 retrotranslocation channel, composed of PEX2, PEX10 and PEX12.

It is found in the peroxisome membrane. It catalyses the reaction [E2 ubiquitin-conjugating enzyme]-S-ubiquitinyl-L-cysteine + [acceptor protein]-L-cysteine = [E2 ubiquitin-conjugating enzyme]-L-cysteine + [acceptor protein]-S-ubiquitinyl-L-cysteine.. It functions in the pathway protein modification; protein ubiquitination. E3 ubiquitin-protein ligase component of a retrotranslocation channel required for peroxisome organization by mediating export of the PEX5 receptor from peroxisomes to the cytosol, thereby promoting PEX5 recycling. The retrotranslocation channel is composed of PEX2, PEX10 and PEX12; each subunit contributing transmembrane segments that coassemble into an open channel that specifically allows the passage of PEX5 through the peroxisomal membrane. PEX2 also regulates peroxisome organization by acting as a E3 ubiquitin-protein ligase. PEX2 ubiquitinates PEX5 during its passage through the retrotranslocation channel: catalyzes monoubiquitination of PEX5 at 'Cys-6', a modification that acts as a signal for PEX5 extraction into the cytosol. In Thermothelomyces thermophilus (strain ATCC 42464 / BCRC 31852 / DSM 1799) (Sporotrichum thermophile), this protein is Peroxisome assembly protein 2.